The primary structure comprises 1447 residues: DNA topoisomerase 2 (1447 aa).

Residues Asn72, Asn101, 129–131, and 142–149 contribute to the ATP site; these read SSN and GRNGYGAK. The segment at 323–325 is interaction with DNA; it reads KKK. Position 357 to 359 (357 to 359) interacts with ATP; the sequence is QTK. Residues 435–552 form the Toprim domain; sequence CTLILTEGDS…ELLRLPFLEE (118 aa). Mg(2+)-binding residues include Glu441, Asp521, and Asp523. The Topo IIA-type catalytic domain occupies 695–1169; sequence IPSLVDGLKP…TPEMLWLDDL (475 aa). Tyr785 (O-(5'-phospho-DNA)-tyrosine intermediate) is an active-site residue. Residues 972-981 are interaction with DNA; the sequence is KLTTTLSTNQ. Disordered stretches follow at residues 1079–1110, 1183–1231, and 1246–1447; these read EDAE…EVDP, ERAE…DGEP, and AAAK…DFNC. Residues 1081-1094 show a composition bias toward acidic residues; the sequence is AEQADEEDEEEEEA. The span at 1255 to 1281 shows a compositional bias: basic and acidic residues; it reads KEPKKPKEPKEPKVKKEPKGKQIKAEP. A compositionally biased stretch (acidic residues) spans 1283–1293; sequence ASGDEVDEFDA. Residue Ser1284 is modified to Phosphoserine. Basic and acidic residues-rich tracts occupy residues 1310 to 1325 and 1332 to 1359; these read VKKE…KKEN and SKID…ERPG. At Ser1344 the chain carries Phosphoserine. Position 1352 is a phosphothreonine (Thr1352). Residues Ser1374, Ser1385, Ser1392, and Ser1396 each carry the phosphoserine modification. The span at 1374–1394 shows a compositional bias: acidic residues; the sequence is SDEEEDGGNVGSDDDGNASDD. The span at 1395–1408 shows a compositional bias: basic and acidic residues; that stretch reads DSPKRPAKRGREDE. Residues 1413-1423 are compositionally biased toward basic residues; the sequence is AKKKAPPKKRR. The segment covering 1427 to 1447 has biased composition (acidic residues); it reads ESDDDDIEIDEDDDDDSDFNC.

This sequence belongs to the type II topoisomerase family. As to quaternary structure, homodimer. Interacts with mod(mdg4). Interacts with barr. Interacts with ph-p. Interacts with mle; the interaction mediates association with the MSL dosage compensation complex. Mg(2+) serves as cofactor. It depends on Mn(2+) as a cofactor. Ca(2+) is required as a cofactor. In terms of processing, phosphorylated. Phosphorylation by casein kinase II enhances ATPase activity.

Its subcellular location is the nucleus. It localises to the chromosome. The protein resides in the cytoplasm. The enzyme catalyses ATP-dependent breakage, passage and rejoining of double-stranded DNA.. Control of topological states of DNA by transient breakage and subsequent rejoining of DNA strands. Topoisomerase II makes double-strand breaks. Essential during mitosis and meiosis for proper segregation of daughter chromosomes. During meiosis, it disrupts heterochromatic connections between achiasmate and chiasmate homologs after spindle assembly so that chromosomes can separate at prometaphase I. During mitosis, it functions in the separation of sister chromatids by establishing amphitelic kinetochore attachments in mitotic spindles. May have a role in chromatin condensation and chromosome structure. May be involved in X-chromosome dosage compensation, perhaps by modifying the topological state of compensated genes. Regulates activity of the gypsy chromatin insulator complex by binding to mod(mdg4) and preventing its degradation. The protein is DNA topoisomerase 2 of Drosophila melanogaster (Fruit fly).